Consider the following 284-residue polypeptide: Protease HtpX homolog (284 aa).

The next 2 helical transmembrane spans lie at 7-26 and 33-47; these read TYLL…MMLH and IILA…YYMS. Residue histidine 129 coordinates Zn(2+). Glutamate 130 is an active-site residue. Residue histidine 133 coordinates Zn(2+). Helical transmembrane passes span 148–168 and 180–200; these read LAGA…IFFV and IGTI…QFAI. Glutamate 205 is a Zn(2+) binding site.

The protein belongs to the peptidase M48B family. It depends on Zn(2+) as a cofactor.

The protein resides in the cell membrane. This chain is Protease HtpX homolog, found in Methanocaldococcus jannaschii (strain ATCC 43067 / DSM 2661 / JAL-1 / JCM 10045 / NBRC 100440) (Methanococcus jannaschii).